Consider the following 341-residue polypeptide: Anthranilate phosphoribosyltransferase (341 aa).

5-phospho-alpha-D-ribose 1-diphosphate-binding positions include Gly-80, 83–84 (GD), Thr-88, 90–93 (NIST), 108–116 (KHGNRAVSS), and Ser-120. Anthranilate is bound at residue Gly-80. Position 92 (Ser-92) interacts with Mg(2+). Asn-111 serves as a coordination point for anthranilate. Arg-166 is a binding site for anthranilate. Residues Asp-225 and Glu-226 each coordinate Mg(2+).

The protein belongs to the anthranilate phosphoribosyltransferase family. As to quaternary structure, homodimer. Requires Mg(2+) as cofactor.

The catalysed reaction is N-(5-phospho-beta-D-ribosyl)anthranilate + diphosphate = 5-phospho-alpha-D-ribose 1-diphosphate + anthranilate. Its pathway is amino-acid biosynthesis; L-tryptophan biosynthesis; L-tryptophan from chorismate: step 2/5. Its function is as follows. Catalyzes the transfer of the phosphoribosyl group of 5-phosphorylribose-1-pyrophosphate (PRPP) to anthranilate to yield N-(5'-phosphoribosyl)-anthranilate (PRA). The chain is Anthranilate phosphoribosyltransferase from Brevibacillus brevis (strain 47 / JCM 6285 / NBRC 100599).